A 562-amino-acid polypeptide reads, in one-letter code: Cytosolic invertase 1 (562 aa).

This sequence belongs to the glycosyl hydrolase 100 family.

The protein localises to the cytoplasm. Its subcellular location is the cytosol. The enzyme catalyses Hydrolysis of terminal non-reducing beta-D-fructofuranoside residues in beta-D-fructofuranosides.. Its function is as follows. Cytosolic invertase that cleaves sucrose into glucose and fructose and is involved in the regulation of primary root elongation, lateral root formation, floral transition and pollen development. This chain is Cytosolic invertase 1, found in Oryza sativa subsp. japonica (Rice).